Consider the following 661-residue polypeptide: Junctophilin-1 (661 aa).

Residues 1–639 are Cytoplasmic-facing; sequence MTGGRFDFDD…EKEANSGPNS (639 aa). 5 MORN repeats span residues 14–36, 38–59, 60–82, 106–128, and 129–151; these read YCGGWEEGKAHGHGICTGPKGQG, YSGSWSHGFEVVGGYTWPSGNT, YQGYWAQGKRHGLGVETKGKWMY, YEGTWSNGLQDGYGVETYGDGGT, and YQGQWAGGMRHGYGVRQSVPYGM. Ser157, Ser216, and Ser220 each carry phosphoserine. Positions 228–247 are disordered; it reads SKSSISSKRSSVRSDAAMSR. 2 MORN repeats span residues 281–303 and 304–326; these read YMGEWKNDKRNGFGVSERSNGMK and YEGEWANNKRHGYGCTVFPDGSK. Basic and acidic residues predominate over residues 433–454; it reads DAKENPEEKVPEKPPTPKESPH. Residues 433–631 are disordered; sequence DAKENPEEKV…SNDSCPALEK (199 aa). Position 448 is a phosphothreonine (Thr448). Residue Ser452 is modified to Phosphoserine. Thr461 is subject to Phosphothreonine. 3 positions are modified to phosphoserine: Ser465, Ser469, and Ser475. The span at 599-613 shows a compositional bias: basic and acidic residues; the sequence is VAKESKAEPKAKKSE. A helical; Anchor for type IV membrane protein transmembrane segment spans residues 640–660; that stretch reads IMIVLVMLLNIGLAILFVHFL.

It belongs to the junctophilin family. As to expression, abundantly expressed in skeletal muscle. Very low levels in heart.

It is found in the cell membrane. The protein localises to the endoplasmic reticulum membrane. The protein resides in the sarcoplasmic reticulum membrane. In terms of biological role, junctophilins contribute to the formation of junctional membrane complexes (JMCs) which link the plasma membrane with the endoplasmic or sarcoplasmic reticulum in excitable cells. Provides a structural foundation for functional cross-talk between the cell surface and intracellular calcium release channels. JPH1 contributes to the construction of the skeletal muscle triad by linking the t-tubule (transverse-tubule) and SR (sarcoplasmic reticulum) membranes. This is Junctophilin-1 (JPH1) from Homo sapiens (Human).